Here is a 229-residue protein sequence, read N- to C-terminus: Heptaprenylglyceryl phosphate synthase (229 aa).

Lys-12 is a binding site for sn-glycerol 1-phosphate. Mg(2+)-binding residues include Asp-14 and Ser-40. Residues 159 to 164 (YLEYSG), Gly-189, and 209 to 210 (GN) contribute to the sn-glycerol 1-phosphate site.

Belongs to the GGGP/HepGP synthase family. Group I subfamily. In terms of assembly, homodimer. The cofactor is Mg(2+).

The enzyme catalyses sn-glycerol 1-phosphate + all-trans-heptaprenyl diphosphate = 3-heptaprenyl-sn-glycero-1-phosphate + diphosphate. It participates in membrane lipid metabolism; glycerophospholipid metabolism. Functionally, prenyltransferase that catalyzes in vivo the transfer of the heptaprenyl moiety of heptaprenyl pyrophosphate (HepPP; 35 carbon atoms) to the C3 hydroxyl of sn-glycerol-1-phosphate (G1P), producing heptaprenylglyceryl phosphate (HepGP). This reaction is an ether-bond-formation step in the biosynthesis of archaea-type G1P-based membrane lipids found in Bacillales. This chain is Heptaprenylglyceryl phosphate synthase, found in Bacillus velezensis (strain DSM 23117 / BGSC 10A6 / LMG 26770 / FZB42) (Bacillus amyloliquefaciens subsp. plantarum).